Consider the following 365-residue polypeptide: Chorismate synthase (365 aa).

2 residues coordinate NADP(+): arginine 48 and arginine 54. FMN-binding positions include 125-127 (RSS), 237-238 (NA), glycine 277, 292-296 (KPTSS), and arginine 318.

Belongs to the chorismate synthase family. Homotetramer. It depends on FMNH2 as a cofactor.

The enzyme catalyses 5-O-(1-carboxyvinyl)-3-phosphoshikimate = chorismate + phosphate. Its pathway is metabolic intermediate biosynthesis; chorismate biosynthesis; chorismate from D-erythrose 4-phosphate and phosphoenolpyruvate: step 7/7. Functionally, catalyzes the anti-1,4-elimination of the C-3 phosphate and the C-6 proR hydrogen from 5-enolpyruvylshikimate-3-phosphate (EPSP) to yield chorismate, which is the branch point compound that serves as the starting substrate for the three terminal pathways of aromatic amino acid biosynthesis. This reaction introduces a second double bond into the aromatic ring system. This Verminephrobacter eiseniae (strain EF01-2) protein is Chorismate synthase.